The following is a 389-amino-acid chain: MKWMVVVLLCLQLLEAKVVKVPLKKLKSLRETMKEKGLLEEFLKNHKYDPAQKYRYTDFSVAYEPMAYMDAAYFGEISIGTPPQNFLVLFDTGSSNLWVPSVYCQTQACTGHTRFNPSQSSTYSTNGQTFSLQYGSGSLTGFFGYDTLTVQSIQVPNQEFGLSENEPGTNFVYAQFDGIMGMAYPSLAMGGATTALQGMLQEGALTSPVFSFYLSNQQGSQNGGAVIFGGVDNSLYQGQIYWAPVTQELYWQIGIEEFLIGGQASGWCSQGCQAIVDTGTSLLTVPQQYMSALLQATGAQEDQYGQFFVNCNYIQNLPTFTFIINGVQFPLPPSSYILNNNGYCTVGVEPTYLPSQNGQPLWILGDVFLRSYYSVYDMGNNRVGFATAA.

The first 16 residues, 1 to 16 (MKWMVVVLLCLQLLEA), serve as a signal peptide directing secretion. The propeptide at 17–59 (KVVKVPLKKLKSLRETMKEKGLLEEFLKNHKYDPAQKYRYTDF) is activation peptide. The Peptidase A1 domain maps to 73 to 386 (YFGEISIGTP…DMGNNRVGFA (314 aa)). Residue Asp-91 is part of the active site. 2 cysteine pairs are disulfide-bonded: Cys-104-Cys-109 and Cys-268-Cys-272. Asp-277 is a catalytic residue. An intrachain disulfide couples Cys-311 to Cys-344.

Belongs to the peptidase A1 family.

The protein localises to the secreted. It catalyses the reaction More restricted specificity than pepsin A, but shows preferential cleavage at Tyr-|-Xaa bonds. High activity on hemoglobin.. In terms of biological role, hydrolyzes a variety of proteins. This is Gastricsin (PGC) from Rhinolophus ferrumequinum (Greater horseshoe bat).